The primary structure comprises 463 residues: Asparagine--tRNA ligase (463 aa).

This sequence belongs to the class-II aminoacyl-tRNA synthetase family. As to quaternary structure, homodimer.

It is found in the cytoplasm. The catalysed reaction is tRNA(Asn) + L-asparagine + ATP = L-asparaginyl-tRNA(Asn) + AMP + diphosphate + H(+). The sequence is that of Asparagine--tRNA ligase from Bacillus thuringiensis subsp. konkukian (strain 97-27).